The primary structure comprises 633 residues: tRNA uridine 5-carboxymethylaminomethyl modification enzyme MnmG (633 aa).

FAD-binding positions include 15 to 20 (GAGHAG), Ile-127, and Ser-182. 276–290 (GPRYCPSIEDKIVRF) lines the NAD(+) pocket. Gln-373 serves as a coordination point for FAD.

This sequence belongs to the MnmG family. In terms of assembly, homodimer. Heterotetramer of two MnmE and two MnmG subunits. The cofactor is FAD.

It is found in the cytoplasm. Its function is as follows. NAD-binding protein involved in the addition of a carboxymethylaminomethyl (cmnm) group at the wobble position (U34) of certain tRNAs, forming tRNA-cmnm(5)s(2)U34. The chain is tRNA uridine 5-carboxymethylaminomethyl modification enzyme MnmG from Streptococcus agalactiae serotype Ia (strain ATCC 27591 / A909 / CDC SS700).